Here is a 431-residue protein sequence, read N- to C-terminus: Glutamate--tRNA ligase 1 (431 aa).

Residues 6-16 (PSPTGDMHIGN) carry the 'HIGH' region motif. The 'KMSKS' region motif lies at 235–239 (KMSKR). Residue Lys238 coordinates ATP.

The protein belongs to the class-I aminoacyl-tRNA synthetase family. Glutamate--tRNA ligase type 1 subfamily. As to quaternary structure, monomer.

Its subcellular location is the cytoplasm. The catalysed reaction is tRNA(Glu) + L-glutamate + ATP = L-glutamyl-tRNA(Glu) + AMP + diphosphate. Its function is as follows. Catalyzes the attachment of glutamate to tRNA(Glu) in a two-step reaction: glutamate is first activated by ATP to form Glu-AMP and then transferred to the acceptor end of tRNA(Glu). This is Glutamate--tRNA ligase 1 from Campylobacter jejuni subsp. jejuni serotype O:23/36 (strain 81-176).